We begin with the raw amino-acid sequence, 186 residues long: Peptidyl-tRNA hydrolase (186 aa).

A tRNA-binding site is contributed by Tyr14. The Proton acceptor role is filled by His19. Residues Phe64, Asn66, and Asn112 each coordinate tRNA.

The protein belongs to the PTH family. Monomer.

It is found in the cytoplasm. It carries out the reaction an N-acyl-L-alpha-aminoacyl-tRNA + H2O = an N-acyl-L-amino acid + a tRNA + H(+). Functionally, hydrolyzes ribosome-free peptidyl-tRNAs (with 1 or more amino acids incorporated), which drop off the ribosome during protein synthesis, or as a result of ribosome stalling. In terms of biological role, catalyzes the release of premature peptidyl moieties from peptidyl-tRNA molecules trapped in stalled 50S ribosomal subunits, and thus maintains levels of free tRNAs and 50S ribosomes. The sequence is that of Peptidyl-tRNA hydrolase from Mycoplasma capricolum subsp. capricolum (strain California kid / ATCC 27343 / NCTC 10154).